Here is a 363-residue protein sequence, read N- to C-terminus: Probable protein phosphatase 2C member 13, mitochondrial (363 aa).

A mitochondrion-targeting transit peptide spans 1 to 59 (MVCFASLRRALPLLLRATTTTTPRFLLPRALSGGVGGGAAVDARALLRGHSGWRGLRVA). The PPM-type phosphatase domain occupies 111-357 (KCGYSSFRGK…DNITCIVVQF (247 aa)). 4 residues coordinate Mn(2+): Asp-147, Gly-148, Asp-309, and Asp-348.

It belongs to the PP2C family. Requires Mg(2+) as cofactor. It depends on Mn(2+) as a cofactor. As to expression, highly expressed in mature pollen grains.

Its subcellular location is the mitochondrion. It catalyses the reaction O-phospho-L-seryl-[protein] + H2O = L-seryl-[protein] + phosphate. It carries out the reaction O-phospho-L-threonyl-[protein] + H2O = L-threonyl-[protein] + phosphate. Its function is as follows. Probable protein phosphatase that may play a role as a mitochondrial signal transduction mediator in pollen germination. May function in retrograde signaling from the mitochondria to the nucleus. May be a downstream factor of cytoplasmic male sterility (CMS). CMS is caused by genetic incompatibility between nuclei and mitochondria within male reproductive organs. This chain is Probable protein phosphatase 2C member 13, mitochondrial, found in Oryza sativa subsp. japonica (Rice).